We begin with the raw amino-acid sequence, 114 residues long: Ribonuclease P protein component (114 aa).

Belongs to the RnpA family. In terms of assembly, consists of a catalytic RNA component (M1 or rnpB) and a protein subunit.

The catalysed reaction is Endonucleolytic cleavage of RNA, removing 5'-extranucleotides from tRNA precursor.. In terms of biological role, RNaseP catalyzes the removal of the 5'-leader sequence from pre-tRNA to produce the mature 5'-terminus. It can also cleave other RNA substrates such as 4.5S RNA. The protein component plays an auxiliary but essential role in vivo by binding to the 5'-leader sequence and broadening the substrate specificity of the ribozyme. The protein is Ribonuclease P protein component of Exiguobacterium sp. (strain ATCC BAA-1283 / AT1b).